A 168-amino-acid polypeptide reads, in one-letter code: Quinol oxidase subunit 2 (168 aa).

A helical membrane pass occupies residues 9–31 (EVWFIVMLVLVLIFFSWNVYYLS).

The protein belongs to the cytochrome c oxidase subunit 2 family.

Its subcellular location is the cell membrane. It catalyses the reaction 2 a quinol + O2 = 2 a quinone + 2 H2O. Functionally, the terminal oxidase is the component of the respiratory chain that catalyzes the reduction of oxygen to water. Subunits 1-3 form the functional core of the enzyme complex. In terms of biological role, subunit 2 transfers the electrons from caldariella quinol to the bimetallic center of the catalytic subunit 1 that is formed by heme A3 and Cu(B). This chain is Quinol oxidase subunit 2 (soxA), found in Sulfolobus acidocaldarius (strain ATCC 33909 / DSM 639 / JCM 8929 / NBRC 15157 / NCIMB 11770).